A 571-amino-acid chain; its full sequence is Proline--tRNA ligase (571 aa).

It belongs to the class-II aminoacyl-tRNA synthetase family. ProS type 1 subfamily. Homodimer.

Its subcellular location is the cytoplasm. It catalyses the reaction tRNA(Pro) + L-proline + ATP = L-prolyl-tRNA(Pro) + AMP + diphosphate. Functionally, catalyzes the attachment of proline to tRNA(Pro) in a two-step reaction: proline is first activated by ATP to form Pro-AMP and then transferred to the acceptor end of tRNA(Pro). As ProRS can inadvertently accommodate and process non-cognate amino acids such as alanine and cysteine, to avoid such errors it has two additional distinct editing activities against alanine. One activity is designated as 'pretransfer' editing and involves the tRNA(Pro)-independent hydrolysis of activated Ala-AMP. The other activity is designated 'posttransfer' editing and involves deacylation of mischarged Ala-tRNA(Pro). The misacylated Cys-tRNA(Pro) is not edited by ProRS. The sequence is that of Proline--tRNA ligase from Pseudomonas putida (strain ATCC 700007 / DSM 6899 / JCM 31910 / BCRC 17059 / LMG 24140 / F1).